The chain runs to 188 residues: Protein GrpE (188 aa).

The segment at methionine 1 to glycine 22 is disordered.

It belongs to the GrpE family. In terms of assembly, homodimer.

The protein localises to the cytoplasm. Functionally, participates actively in the response to hyperosmotic and heat shock by preventing the aggregation of stress-denatured proteins, in association with DnaK and GrpE. It is the nucleotide exchange factor for DnaK and may function as a thermosensor. Unfolded proteins bind initially to DnaJ; upon interaction with the DnaJ-bound protein, DnaK hydrolyzes its bound ATP, resulting in the formation of a stable complex. GrpE releases ADP from DnaK; ATP binding to DnaK triggers the release of the substrate protein, thus completing the reaction cycle. Several rounds of ATP-dependent interactions between DnaJ, DnaK and GrpE are required for fully efficient folding. This Pseudomonas fluorescens (strain ATCC BAA-477 / NRRL B-23932 / Pf-5) protein is Protein GrpE.